We begin with the raw amino-acid sequence, 441 residues long: Collagen alpha-1(XXVI) chain (441 aa).

Positions Met1–Ala20 are cleaved as a signal peptide. One can recognise an EMI domain in the interval Arg52 to Glu128. 3 disulfide bridges follow: Cys56–Cys118, Cys83–Cys89, and Cys117–Cys126. Asn70 carries N-linked (GlcNAc...) asparagine glycosylation. An N-linked (GlcNAc...) asparagine glycan is attached at Asn132. Disordered stretches follow at residues Ala156–Glu362 and Pro390–Lys441. Collagen-like domains lie at Gly199–Ser267 and Gly302–Lys355. Pro residues-rich tracts occupy residues Pro200–Pro215, Ala231–Arg243, Pro252–Asn269, and Pro306–Thr327. The segment covering Val348 to Ala357 has biased composition (basic and acidic residues).

As to quaternary structure, homotrimer or heterotrimer. Post-translationally, hydroxylated on proline residues.

It is found in the secreted. The protein localises to the extracellular space. It localises to the extracellular matrix. The sequence is that of Collagen alpha-1(XXVI) chain (COL26A1) from Homo sapiens (Human).